The following is a 921-amino-acid chain: Isoleucine--tRNA ligase (921 aa).

The 'HIGH' region motif lies at 57 to 67 (PYANGELHMGH). Position 552 (glutamate 552) interacts with L-isoleucyl-5'-AMP. The 'KMSKS' region signature appears at 593-597 (KMSKS). Lysine 596 provides a ligand contact to ATP. Residues cysteine 888, cysteine 891, cysteine 908, and cysteine 911 each coordinate Zn(2+).

It belongs to the class-I aminoacyl-tRNA synthetase family. IleS type 1 subfamily. Monomer. The cofactor is Zn(2+).

The protein localises to the cytoplasm. It catalyses the reaction tRNA(Ile) + L-isoleucine + ATP = L-isoleucyl-tRNA(Ile) + AMP + diphosphate. In terms of biological role, catalyzes the attachment of isoleucine to tRNA(Ile). As IleRS can inadvertently accommodate and process structurally similar amino acids such as valine, to avoid such errors it has two additional distinct tRNA(Ile)-dependent editing activities. One activity is designated as 'pretransfer' editing and involves the hydrolysis of activated Val-AMP. The other activity is designated 'posttransfer' editing and involves deacylation of mischarged Val-tRNA(Ile). The chain is Isoleucine--tRNA ligase from Listeria monocytogenes serovar 1/2a (strain ATCC BAA-679 / EGD-e).